Consider the following 136-residue polypeptide: Large ribosomal subunit protein uL16 (136 aa).

Belongs to the universal ribosomal protein uL16 family. Part of the 50S ribosomal subunit.

Functionally, binds 23S rRNA and is also seen to make contacts with the A and possibly P site tRNAs. This is Large ribosomal subunit protein uL16 from Edwardsiella ictaluri (strain 93-146).